Consider the following 491-residue polypeptide: Glycylpeptide N-tetradecanoyltransferase (491 aa).

45-48 (HKFW) is a binding site for tetradecanoyl-CoA. The disordered stretch occupies residues 53 to 79 (VPQITGSGASAPMEEGPIDDPKTPADV). Tetradecanoyl-CoA-binding positions include 182 to 184 (LCV) and 190 to 194 (SKRLA). L491 functions as the Proton acceptor; via carboxylate in the catalytic mechanism.

This sequence belongs to the NMT family. In terms of assembly, monomer.

It is found in the cytoplasm. The enzyme catalyses N-terminal glycyl-[protein] + tetradecanoyl-CoA = N-tetradecanoylglycyl-[protein] + CoA + H(+). Its function is as follows. Adds a myristoyl group to the N-terminal glycine residue of certain cellular proteins. The protein is Glycylpeptide N-tetradecanoyltransferase of Cryptococcus neoformans (Filobasidiella neoformans).